Here is a 246-residue protein sequence, read N- to C-terminus: 1-(5-phosphoribosyl)-5-[(5-phosphoribosylamino)methylideneamino] imidazole-4-carboxamide isomerase (246 aa).

Catalysis depends on Asp-7, which acts as the Proton acceptor. Catalysis depends on Asp-129, which acts as the Proton donor.

The protein belongs to the HisA/HisF family.

It is found in the cytoplasm. The enzyme catalyses 1-(5-phospho-beta-D-ribosyl)-5-[(5-phospho-beta-D-ribosylamino)methylideneamino]imidazole-4-carboxamide = 5-[(5-phospho-1-deoxy-D-ribulos-1-ylimino)methylamino]-1-(5-phospho-beta-D-ribosyl)imidazole-4-carboxamide. Its pathway is amino-acid biosynthesis; L-histidine biosynthesis; L-histidine from 5-phospho-alpha-D-ribose 1-diphosphate: step 4/9. This Shewanella sediminis (strain HAW-EB3) protein is 1-(5-phosphoribosyl)-5-[(5-phosphoribosylamino)methylideneamino] imidazole-4-carboxamide isomerase.